Reading from the N-terminus, the 152-residue chain is Regulatory protein RecX (152 aa).

Belongs to the RecX family.

Its subcellular location is the cytoplasm. In terms of biological role, modulates RecA activity. This chain is Regulatory protein RecX, found in Haemophilus influenzae (strain PittGG).